The following is a 238-amino-acid chain: Ubiquinone biosynthesis O-methyltransferase (238 aa).

Positions 38, 57, 78, and 124 each coordinate S-adenosyl-L-methionine.

The protein belongs to the methyltransferase superfamily. UbiG/COQ3 family.

It catalyses the reaction a 3-demethylubiquinol + S-adenosyl-L-methionine = a ubiquinol + S-adenosyl-L-homocysteine + H(+). It carries out the reaction a 3-(all-trans-polyprenyl)benzene-1,2-diol + S-adenosyl-L-methionine = a 2-methoxy-6-(all-trans-polyprenyl)phenol + S-adenosyl-L-homocysteine + H(+). It functions in the pathway cofactor biosynthesis; ubiquinone biosynthesis. Its function is as follows. O-methyltransferase that catalyzes the 2 O-methylation steps in the ubiquinone biosynthetic pathway. The protein is Ubiquinone biosynthesis O-methyltransferase of Marinobacter nauticus (strain ATCC 700491 / DSM 11845 / VT8) (Marinobacter aquaeolei).